A 237-amino-acid polypeptide reads, in one-letter code: Ribosomal RNA small subunit methyltransferase G (237 aa).

S-adenosyl-L-methionine contacts are provided by residues Gly76, Phe81, 128–129 (VE), and Arg147.

This sequence belongs to the methyltransferase superfamily. RNA methyltransferase RsmG family.

It is found in the cytoplasm. Its function is as follows. Specifically methylates the N7 position of a guanine in 16S rRNA. The sequence is that of Ribosomal RNA small subunit methyltransferase G from Prochlorococcus marinus (strain AS9601).